The primary structure comprises 217 residues: Adenylate kinase (217 aa).

11–16 (GAGKGT) provides a ligand contact to ATP. Positions 31–60 (STGDMFREAMANETPVGLEAKSYIDKGNLV) are NMP. AMP contacts are provided by residues Thr-32, Arg-37, 58-60 (NLV), 86-89 (GFPR), and Gln-93. Residues 127–165 (ARYICKKCGATYNKISNPTKVEGTCDRCGGHEFFQREDD) are LID. Arg-128 contributes to the ATP binding site. Residues Cys-131 and Cys-134 each contribute to the Zn(2+) site. 137-138 (TY) serves as a coordination point for ATP. Residues Cys-151 and Cys-154 each coordinate Zn(2+). Residues Arg-162 and Arg-173 each coordinate AMP. Gln-201 serves as a coordination point for ATP.

The protein belongs to the adenylate kinase family. In terms of assembly, monomer.

The protein localises to the cytoplasm. It catalyses the reaction AMP + ATP = 2 ADP. Its pathway is purine metabolism; AMP biosynthesis via salvage pathway; AMP from ADP: step 1/1. Its function is as follows. Catalyzes the reversible transfer of the terminal phosphate group between ATP and AMP. Plays an important role in cellular energy homeostasis and in adenine nucleotide metabolism. This Lactobacillus johnsonii (strain CNCM I-12250 / La1 / NCC 533) protein is Adenylate kinase.